Consider the following 271-residue polypeptide: Uridine-cytidine kinase 1-A (271 aa).

ATP is bound at residue 24–32 (GGTASGKST). The substrate site is built by Asp-81, Tyr-109, His-114, Arg-163, Arg-172, and Gln-180. Asp-209 contacts ATP. A disordered region spans residues 241–271 (SQKRTFPGQGESGGLILPGKRTHLESSSRPH). Basic and acidic residues predominate over residues 262–271 (THLESSSRPH).

The protein belongs to the uridine kinase family.

It catalyses the reaction uridine + ATP = UMP + ADP + H(+). The catalysed reaction is cytidine + ATP = CMP + ADP + H(+). It participates in pyrimidine metabolism; CTP biosynthesis via salvage pathway; CTP from cytidine: step 1/3. The protein operates within pyrimidine metabolism; UMP biosynthesis via salvage pathway; UMP from uridine: step 1/1. Functionally, phosphorylates uridine and cytidine to uridine monophosphate and cytidine monophosphate. Does not phosphorylate deoxyribonucleosides or purine ribonucleosides. Can use ATP or GTP as a phosphate donor. The protein is Uridine-cytidine kinase 1-A (uck1-a) of Xenopus laevis (African clawed frog).